The primary structure comprises 310 residues: Homeobox protein knotted-1-like 2 (310 aa).

Residues S178–D208 form a disordered region. Residues S185 to A197 are compositionally biased toward acidic residues. The 21-residue stretch at D208–F228 folds into the ELK domain. The homeobox; TALE-type DNA-binding region spans S229–S292.

The protein belongs to the TALE/KNOX homeobox family. As to quaternary structure, may form heterodimeric complex with the TALE/BELL protein BEL1, BLH1 and BLH2. Interacts with OFP12 and OFP14. Interacts with BZIP30. Expressed predominantly in shoot apices of seedlings, in the receptacle and developing pistil of flowers and in axillary buds of inflorescence stems.

The protein resides in the nucleus. Its function is as follows. May play a role in meristem function, and may be involved in maintaining cells in an undifferentiated, meristematic state. Probably binds to the DNA sequence 5'-TGAC-3'. The chain is Homeobox protein knotted-1-like 2 (KNAT2) from Arabidopsis thaliana (Mouse-ear cress).